A 472-amino-acid polypeptide reads, in one-letter code: F420-non-reducing hydrogenase subunit A (472 aa).

The Ni(2+) site is built by Cys61, Cys64, Cys442, and Cys445.

Belongs to the [NiFe]/[NiFeSe] hydrogenase large subunit family. The F420-non-reducing hydrogenase is composed of three subunits; MvhA, MvhD and MvhG. It forms a complex with the heterodisulfide reductase (hdr). Requires Ni(2+) as cofactor.

Functionally, part of a complex that provides reducing equivalents for heterodisulfide reductase. The sequence is that of F420-non-reducing hydrogenase subunit A (mvhA) from Methanothermobacter thermautotrophicus (strain ATCC 29096 / DSM 1053 / JCM 10044 / NBRC 100330 / Delta H) (Methanobacterium thermoautotrophicum).